Reading from the N-terminus, the 119-residue chain is Large ribosomal subunit protein uL24 (119 aa).

It belongs to the universal ribosomal protein uL24 family. In terms of assembly, part of the 50S ribosomal subunit.

Its function is as follows. One of two assembly initiator proteins, it binds directly to the 5'-end of the 23S rRNA, where it nucleates assembly of the 50S subunit. Located at the polypeptide exit tunnel on the outside of the subunit. This Methanococcus vannielii protein is Large ribosomal subunit protein uL24.